Reading from the N-terminus, the 219-residue chain is Large ribosomal subunit protein uL3 (219 aa).

Positions Gly133–Val145 are enriched in polar residues. The interval Gly133 to Gln153 is disordered. Gln153 bears the N5-methylglutamine mark.

This sequence belongs to the universal ribosomal protein uL3 family. In terms of assembly, part of the 50S ribosomal subunit. Forms a cluster with proteins L14 and L19. Methylated by PrmB.

Functionally, one of the primary rRNA binding proteins, it binds directly near the 3'-end of the 23S rRNA, where it nucleates assembly of the 50S subunit. This is Large ribosomal subunit protein uL3 from Paraburkholderia phymatum (strain DSM 17167 / CIP 108236 / LMG 21445 / STM815) (Burkholderia phymatum).